The chain runs to 551 residues: Cytochrome c oxidase subunit 1 homolog (551 aa).

3 helical membrane passes run 14–34, 40–60, and 88–108; these read GELG…VVAA, EYAF…FVIG, and VGTL…VIIA. Histidine 132 is a heme b binding site. Transmembrane regions (helical) follow at residues 133–153, 169–189, 202–222, 229–249, 280–300, 313–333, 345–365, and 383–403; these read TSAV…FYVV, FVVL…LLGI, ADLW…GTVL, IYVA…LHLG, GHNA…YYFI, LSIV…PHHL, LGMT…INGL, and MMVV…MMSV. 3 residues coordinate Cu cation: histidine 281, histidine 331, and histidine 332. Heme b contacts are provided by histidine 419 and histidine 421. The next 3 helical transmembrane spans lie at 424–444, 459–479, and 513–533; these read ALGW…PWLW, FWVS…AGIL, and IGGI…FMTI.

Belongs to the heme-copper respiratory oxidase family. The cofactor is Cu(2+). Heme b is required as a cofactor.

It localises to the cell membrane. The catalysed reaction is 4 Fe(II)-[cytochrome c] + O2 + 8 H(+)(in) = 4 Fe(III)-[cytochrome c] + 2 H2O + 4 H(+)(out). Its pathway is energy metabolism; oxidative phosphorylation. Functionally, cytochrome c oxidase is the component of the respiratory chain that catalyzes the reduction of oxygen to water. Subunits 1-3 form the functional core of the enzyme complex. Co I is the catalytic subunit of the enzyme. Electrons originating in cytochrome c or a quinol are transferred to the bimetallic center formed by a high-spin heme and copper B. This chain is Cytochrome c oxidase subunit 1 homolog (fixN), found in Azorhizobium caulinodans (strain ATCC 43989 / DSM 5975 / JCM 20966 / LMG 6465 / NBRC 14845 / NCIMB 13405 / ORS 571).